The primary structure comprises 533 residues: Apolipoprotein N-acyltransferase (533 aa).

6 helical membrane-spanning segments follow: residues 17–37 (ALLA…FGFF), 74–94 (WLFG…ALLI), 105–125 (LAIL…AVLA), 127–147 (LLWS…GLLE), 178–198 (VIGV…PALL), and 205–225 (VPGI…GYYA). The 251-residue stretch at 245–495 (VQPAIDQEAK…QGFVDSTLSG (251 aa)) folds into the CN hydrolase domain. E290 functions as the Proton acceptor in the catalytic mechanism. The active site involves K354. The active-site Nucleophile is C407. A helical membrane pass occupies residues 509 to 529 (YFWLIIGIVGMIAVISRMGFI).

The protein belongs to the CN hydrolase family. Apolipoprotein N-acyltransferase subfamily.

The protein localises to the cell inner membrane. The catalysed reaction is N-terminal S-1,2-diacyl-sn-glyceryl-L-cysteinyl-[lipoprotein] + a glycerophospholipid = N-acyl-S-1,2-diacyl-sn-glyceryl-L-cysteinyl-[lipoprotein] + a 2-acyl-sn-glycero-3-phospholipid + H(+). The protein operates within protein modification; lipoprotein biosynthesis (N-acyl transfer). Catalyzes the phospholipid dependent N-acylation of the N-terminal cysteine of apolipoprotein, the last step in lipoprotein maturation. The sequence is that of Apolipoprotein N-acyltransferase from Rhizobium rhizogenes (strain K84 / ATCC BAA-868) (Agrobacterium radiobacter).